The following is a 1292-amino-acid chain: Epidermal growth factor receptor (1292 aa).

Over 1–641 (MYNNYNLCHI…AGLIENELQP (641 aa)) the chain is Extracellular. N-linked (GlcNAc...) asparagine glycans are attached at residues Asn-31, Asn-224, Asn-263, Asn-323, Asn-342, Asn-600, and Asn-605. Residues 642 to 662 (AILAGVAVFALAFLVVAAIIM) traverse the membrane as a helical segment. Residues 663-1292 (YFWRVRAKAK…KPLRKNETTV (630 aa)) lie on the Cytoplasmic side of the membrane. Thr-675 is modified (phosphothreonine; by PKC). Residues 711–978 (MRKGGILGYG…KMSRDPGRYL (268 aa)) form the Protein kinase domain. ATP is bound by residues 717–725 (LGYGAFGNV) and Lys-744. The Proton acceptor role is filled by Asp-836. The tract at residues 1022 to 1066 (PKSRAPIPPGLSASSTSGSPPNTPVKPCWPNGKPLAADSPTPQNQ) is disordered. Residue Tyr-1166 is modified to Phosphotyrosine; by autocatalysis. The interval 1253 to 1292 (SQVRQRSSEEESDHEYYNDFDRLERELQPLKPLRKNETTV) is disordered. Residues 1258–1292 (RSSEEESDHEYYNDFDRLERELQPLKPLRKNETTV) are compositionally biased toward basic and acidic residues.

The protein belongs to the protein kinase superfamily. Tyr protein kinase family. EGF receptor subfamily.

The protein resides in the membrane. The catalysed reaction is L-tyrosyl-[protein] + ATP = O-phospho-L-tyrosyl-[protein] + ADP + H(+). Its activity is regulated as follows. Activated by MRJP1 during queen determination of honeybee larvae. Its function is as follows. Upon binding to its ligands, transduces the signal through the ras-raf-MAPK pathway and is involved in a myriad of developmental decisions. Involved in the determination of adult size, ovary development, and development timing, especially during queen determination of honeybee larvae. May have an important role in the prolongation of longevity in queens. The sequence is that of Epidermal growth factor receptor (Egfr) from Apis mellifera (Honeybee).